Reading from the N-terminus, the 2298-residue chain is MKGHQFKSWIFELREIVREIKNSHYFLDSWTQFNSVGSFIHIFFHQERFRKLLDPRILSILLSRNSQGSTSNRYFTIKSVVLFVVAALLYRINNRNMVESKNLYLKGLLPIPMNSIGPRNDTSEESFGSSNINRLIVSLLYLTKGKKISESCFRDPKESTWVLPITQKCIMPESNWSSRWWRNWIGKKRDFCCKISNETVAGIDISFKEKDIKYLEFLFVYYMDDPIRKGHDWELFDRLSPSKRRNIINLNSGQLFEILVKDWICYLMFAFREKIPIEVEGFFKQQGAGSTIQSNDIEHVSHLFSRNKWAISLQNCAQFHMWQFHQDLFVSWGKNPHESDFLRKISRENWIWLDNVWLVNKDRFFSKVRNVSSNIQYDSTRSSFVQVTDSSQLKGSSDQFIDHFDSISNEDSEYHYHTLINQREIQQLKERSILWDPSFIQTEGREIESDRFPKYLSGYSSMPRLFTEREKRMNNHLLPEESEEFIGNPTRPIRSFFSDRWSELHLGSNPTERSTRDQKLLKKEQDVSFVPSRRSENKEIVNIFKIIAYLQNTVSIHPISSDLGCDMVPKDELDMDSSNKISFLNKNPFFDLFHLFHERKRGGYTLRHDFESEERFQEMADLFTLSITEPDLVYHKGFAFSIDSYGLDQRQFLKEVFNSRDESKKKSLLVLPPIFYEENESFYRRIRQNWVRISCGNDLEDPKQKRVVFASNNIMEAGNQYRLIRNLIQIQFQYSPYGYIRNVLNRFFLMKRPDRNFEYGIQRDQIGNDTLNHRTIMKDTINQHLSNLKKSQKKWFDPLIFLSRTERSINRDPNAYRYKWSNGSKNFQEHLEHFVSERKSLFQVVFDRLCINQYSIDWSEVIDKKDLSKSLRFFLSKLLRFFLSKLLLFLSKLLLFLSNSLPFFFVSFENIPIHRSEIHIYELKGPNDQLCNQLLESIGLQIVHLKKLKPFLLDDHNTSQKSKFLINGGTISPFLFNKIPKWMIDSFHTRKNRRKSFDNTDSYFSMVSHDQDNWLNPLKPFQRSSLISSFSKANRLRFLNNPHHFCFYCNKRFPFYVEKARLNNYDFTYGQFLTILFIRNKIFSSCGGKKKHAFLERDTISPSPIESQVSNIFISNDFPQSGDERYNLYKSFHFPIRSDPLVRRAIYSIADISGTPLIEGQRVNFERTYCQTLSDMNLSDSEEKSLHQYLNFNSNMGLIHTPCSEKYLPSEKRKKWSLCLKKCVDKGQMDRTFQRDSAFSTLSKWNLFQTYMPWFFTSTGYKYLNLIFLDTFSDLLRILSSSPKFVSIFHDIMHGLDISWRILQKKLCLPQRNLISEISSKSLHNLLLSEEMIHRNNESSLISTHLRSPNVREVLYSILFLLLVAGYIVRTHLLFVSRAYSELQTEFEKIKSLMIPSYMIELRKLLDRYPTSELNSFWLKNLFLVALEQLGDCLEEIRGSGGNMLWGGDPAYGVKSIRSKKKDLNINFIDIIDLISIIPNPINRITFSRNTRHLSHTSKEIYSLIRKRKNVSGDWIDDKIESWVANSDSIDDKEREFLVQFSTLRAEKRIDQILLSLTHSDHLSKNDSGYQMIEQPGTIYLRYLVDIHKKYLMNYEFNTSCLAERRIFLAHYQTITYSQTSCGANSFHFPSHGKPFSLRLALSPSRSILVIGSIGTGRSYLVKYLATTSYVPFITVFLNKFLDNKPKGFFIDDIDIDDSDDIDASNDIDRELDTELELLTMMNALTMDMMSEIDRFYITLQFELAKAMSPCIIWIPNIHDLDVNESNYLALGLLVNSLSRDCERCSTRNILVIASTHIPQKVDPALIAPNKLNTCIKIRRLLIPQQRKHFFTLSYTRGFHLEKKMFHTNGFESITMGSSARDLVALTNEALSISITQKKSIIDTNTIRSALHRQTWDLRSQVRSVQDHGILFYQIGRAVAQNVLISNCPIDPISIYMKKKSCNEGDSYLYKWYFELGTSMKKFTILLYLLSCSAGSVAQDLWSLPGPDEKNRITSYGFVENDSDLVHGLLEVQGALVGSSRTEKDCSQFDNDRVTLLFRSEPRNPLYMMQNGSCSIVDQRFLYEKYESEFEEGEGEGVLDPQQIEEDLFNHIVWAPRIWRPRGFLFDCIERPNELGFPYLAGSFRGKRIIYDEKYELQENDSEFLQSGTMQYQRRDRSSKEQGFFRISQFIWDPADPLFFLFKDQPFVSVFSHREFFADEEMSKGLFTSQTDPPTSIYKRWFIKNTQEKHFELLIQRQRWLRTNSSLSNGFFRSNTLSESYQYLSNLFLSNGTLLDRMTKTLLKKRWLFPDEMKIGFM.

1652–1659 is an ATP binding site; that stretch reads GSIGTGRS.

Belongs to the Ycf2 family.

It localises to the plastid. The protein resides in the chloroplast stroma. Probable ATPase of unknown function. Its presence in a non-photosynthetic plant (Epifagus virginiana) and experiments in tobacco indicate that it has an essential function which is probably not related to photosynthesis. This is Protein Ycf2 from Aethionema cordifolium (Lebanon stonecress).